The primary structure comprises 283 residues: MLLKCVCRAGIISIKGIFPRWYSNSQKVANLGQITDYLVVKGVPNLLQKMFKESVLADNVVFRLFPTSHPYIPVLHGKSKYMASLNAMRMIVRKFILGDECRLHISSVKTLTSTSHDEEVKSALQSYNTITCNDKLVIKWQSCIPEDHCKITKLEINDRLKEEKRGNGAGGSFSMRSVPVIDYILHPTANNLNQSVISEYLENAAERSMENKVNETQNSKEDEKKKNDGDGKRSKKKRLSRLIKGTFIFEFNEENSKILVHTIEDVELIHYEKKIATRGAFAC.

The segment covering 208–232 has biased composition (basic and acidic residues); sequence SMENKVNETQNSKEDEKKKNDGDGK. The disordered stretch occupies residues 208 to 237; sequence SMENKVNETQNSKEDEKKKNDGDGKRSKKK.

This is an uncharacterized protein from Saccharomyces cerevisiae (strain ATCC 204508 / S288c) (Baker's yeast).